A 191-amino-acid polypeptide reads, in one-letter code: FMN-dependent NADH:quinone oxidoreductase 1 (191 aa).

FMN contacts are provided by residues S10 and 16-18 (SVS).

Belongs to the azoreductase type 1 family. In terms of assembly, homodimer. FMN is required as a cofactor.

The enzyme catalyses 2 a quinone + NADH + H(+) = 2 a 1,4-benzosemiquinone + NAD(+). It carries out the reaction N,N-dimethyl-1,4-phenylenediamine + anthranilate + 2 NAD(+) = 2-(4-dimethylaminophenyl)diazenylbenzoate + 2 NADH + 2 H(+). Functionally, quinone reductase that provides resistance to thiol-specific stress caused by electrophilic quinones. In terms of biological role, also exhibits azoreductase activity. Catalyzes the reductive cleavage of the azo bond in aromatic azo compounds to the corresponding amines. The protein is FMN-dependent NADH:quinone oxidoreductase 1 of Jannaschia sp. (strain CCS1).